Consider the following 472-residue polypeptide: 3-isopropylmalate dehydratase large subunit (472 aa).

Residues C346, C406, and C409 each coordinate [4Fe-4S] cluster.

Belongs to the aconitase/IPM isomerase family. LeuC type 1 subfamily. Heterodimer of LeuC and LeuD. It depends on [4Fe-4S] cluster as a cofactor.

The catalysed reaction is (2R,3S)-3-isopropylmalate = (2S)-2-isopropylmalate. It participates in amino-acid biosynthesis; L-leucine biosynthesis; L-leucine from 3-methyl-2-oxobutanoate: step 2/4. Its function is as follows. Catalyzes the isomerization between 2-isopropylmalate and 3-isopropylmalate, via the formation of 2-isopropylmaleate. The chain is 3-isopropylmalate dehydratase large subunit from Thermus thermophilus (strain ATCC BAA-163 / DSM 7039 / HB27).